Here is a 525-residue protein sequence, read N- to C-terminus: GMP synthase [glutamine-hydrolyzing] (525 aa).

Residues 9-207 (RILILDFGSQ…VRDICQCEAL (199 aa)) form the Glutamine amidotransferase type-1 domain. Catalysis depends on Cys-86, which acts as the Nucleophile. Residues His-181 and Glu-183 contribute to the active site. Residues 208–400 (WTPAKIIDDA…LGLPYDMLYR (193 aa)) form the GMPS ATP-PPase domain. 235-241 (SGGVDSS) serves as a coordination point for ATP.

Homodimer.

The enzyme catalyses XMP + L-glutamine + ATP + H2O = GMP + L-glutamate + AMP + diphosphate + 2 H(+). The protein operates within purine metabolism; GMP biosynthesis; GMP from XMP (L-Gln route): step 1/1. In terms of biological role, catalyzes the synthesis of GMP from XMP. The polypeptide is GMP synthase [glutamine-hydrolyzing] (Shigella boydii serotype 4 (strain Sb227)).